A 446-amino-acid polypeptide reads, in one-letter code: MPALPILALALAPLLVNGQLSGSVGPLTSAHSKAATKTCNVLDYGAVADNSTDIGSALSEAWDACSDGGLIYIPPGDYAMDTWVSLSGGKATAIILDGTIYRTGTDGGNMILVENSSDFELYSNSSSGAVQGFGYVYHREGDLDGPRILRLQDVSNFAVHDIILVDAPAFHFVMDDCSDGEVYNMAIRGGNSGGLDGIDVWGSNIWVHDVEVTNKDECVTVKSPANNILVESIYCNWSGGCAMGSLGADTDITDILYRNVYTWSSNQMYMIKSNGGSGTVNNTVLENFIGHGNAYSLDVDSYWSSMTAVDGDGVQLSNITFKNWKGTEADGAERGPIKVVCSDTAPCTDITIEDFAMWTESGDEQTYTCESAYGDGFCLEDSDSTTSYTTTQTVTTAPSGYSATTMAADLTTDFGTTASIPIPTIPTSFYPGLTAISPLASAATTA.

The first 18 residues, 1 to 18 (MPALPILALALAPLLVNG), serve as a signal peptide directing secretion. A disulfide bond links cysteine 39 and cysteine 65. 3 N-linked (GlcNAc...) asparagine glycosylation sites follow: asparagine 50, asparagine 115, and asparagine 124. Aspartate 216 serves as the catalytic Proton donor. A disulfide bond links cysteine 218 and cysteine 235. Asparagine 236 and asparagine 281 each carry an N-linked (GlcNAc...) asparagine glycan. The active site involves histidine 291. Asparagine 318 carries N-linked (GlcNAc...) asparagine glycosylation. Intrachain disulfides connect cysteine 341–cysteine 347 and cysteine 369–cysteine 378.

It belongs to the glycosyl hydrolase 28 family.

It is found in the secreted. It carries out the reaction Endohydrolysis of alpha-D-GalA-(1-&gt;2)-alpha-L-Rha glycosidic bond in the rhamnogalacturonan I backbone with initial inversion of anomeric configuration releasing oligosaccharides with beta-D-GalA at the reducing end.. Pectinolytic enzymes consist of four classes of enzymes: pectine lyase, polygalacturonase, pectin methylesterase and rhamnogalacturonase. Hydrolyzes alpha-D-galacturonopyranosyl-(1,2)-alpha-L-rhamnopyranosyl linkages in the backbone of the hairy regions of pectins. This Aspergillus niger (strain ATCC MYA-4892 / CBS 513.88 / FGSC A1513) protein is Probable rhamnogalacturonase A (rhgA).